A 483-amino-acid polypeptide reads, in one-letter code: Aspartyl/glutamyl-tRNA(Asn/Gln) amidotransferase subunit B (483 aa).

This sequence belongs to the GatB/GatE family. GatB subfamily. In terms of assembly, heterotrimer of A, B and C subunits.

The enzyme catalyses L-glutamyl-tRNA(Gln) + L-glutamine + ATP + H2O = L-glutaminyl-tRNA(Gln) + L-glutamate + ADP + phosphate + H(+). It carries out the reaction L-aspartyl-tRNA(Asn) + L-glutamine + ATP + H2O = L-asparaginyl-tRNA(Asn) + L-glutamate + ADP + phosphate + 2 H(+). Allows the formation of correctly charged Asn-tRNA(Asn) or Gln-tRNA(Gln) through the transamidation of misacylated Asp-tRNA(Asn) or Glu-tRNA(Gln) in organisms which lack either or both of asparaginyl-tRNA or glutaminyl-tRNA synthetases. The reaction takes place in the presence of glutamine and ATP through an activated phospho-Asp-tRNA(Asn) or phospho-Glu-tRNA(Gln). In Rickettsia felis (strain ATCC VR-1525 / URRWXCal2) (Rickettsia azadi), this protein is Aspartyl/glutamyl-tRNA(Asn/Gln) amidotransferase subunit B.